The primary structure comprises 133 residues: Small ribosomal subunit protein uS8 (133 aa).

This sequence belongs to the universal ribosomal protein uS8 family. In terms of assembly, part of the 30S ribosomal subunit.

One of the primary rRNA binding proteins, it binds directly to 16S rRNA central domain where it helps coordinate assembly of the platform of the 30S subunit. The polypeptide is Small ribosomal subunit protein uS8 (Staphylothermus marinus (strain ATCC 43588 / DSM 3639 / JCM 9404 / F1)).